Consider the following 210-residue polypeptide: Two-component response regulator ORR7 (210 aa).

Residues 53–92 (VVPLHDNASAEDDDDDEEDDDEDDDDDDDEDDEEEAAPPY) form a disordered region. Acidic residues predominate over residues 61–88 (SAEDDDDDEEDDDEDDDDDDDEDDEEEA). The Response regulatory domain occupies 92-205 (YVMAVDDSSV…VRPADISRIT (114 aa)). Asp-142 carries the post-translational modification 4-aspartylphosphate.

The protein belongs to the ARR family. Type-A subfamily. Two-component system major event consists of a His-to-Asp phosphorelay between a sensor histidine kinase (HK) and a response regulator (RR). In plants, the His-to-Asp phosphorelay involves an additional intermediate named Histidine-containing phosphotransfer protein (HPt). This multistep phosphorelay consists of a His-Asp-His-Asp sequential transfer of a phosphate group between first a His and an Asp of the HK protein, followed by the transfer to a conserved His of the HPt protein and finally the transfer to an Asp in the receiver domain of the RR protein.

In terms of biological role, functions as a response regulator involved in His-to-Asp phosphorelay signal transduction system. Phosphorylation of the Asp residue in the receiver domain activates the ability of the protein to promote the transcription of target genes. Type-A response regulators seem to act as negative regulators of the cytokinin signaling. The chain is Two-component response regulator ORR7 from Oryza sativa subsp. japonica (Rice).